The primary structure comprises 568 residues: MSKKLKDLPVSSTFTSNLPPDPLVPTVQAMKKADDRILHVPRFVEGGGLFTYLTPSLKANSQLLAYSPSSVKSLGLEESETQTEAFQQLVVGSNVDVNKCCPWAQCYGGYQFGDWAGQLGDGRVVSLCELTNPETGKRFEIQVKGAGRTPYSRFADGKAVLRSSIREYLCCEALYALGIPTTQALAISNLEGVVAQRETVEPCAVVCRMAPSWIRIGTFDLQGINNQIESLRKLADYCLNFVLKDGFHGGDTGNRYEKLLRDVAYRNAKTVAKWQAYGFMNGVLNTDNTSILGLSIDYGPFGFLDVYNPSFTPNHDDVFLRYSYRNQPDIIIWNLSKLASALVELIGACDKVDDLQYMEQLHNSTDLLKKAFAYTSEVFEKIVEEYKNIVQNDFYDLMFKRVGLPSDSSNKILITDLLQILEDYELDMPNCFSFLSRNSPSSMENEEYAAKLMQACICLNPNNERVRNESVKAFTNWVGRYSEATKTQEDSSRLASMKKVNPHFTLRNWVLEEVIKEAYIGKFELFKKVCKMAACPFEDTWGFSKEEEDYLCYNTTPSKSQIQCSCSS.

ATP-binding residues include Gly-120, Gly-122, Arg-123, Lys-144, Asp-156, Gly-157, Arg-208, and Arg-215. Catalysis depends on Asp-287, which acts as the Proton acceptor. Asn-288 and Asp-297 together coordinate Mg(2+). Asp-297 contacts ATP.

This sequence belongs to the SELO family. Mg(2+) is required as a cofactor. In terms of processing, forms probably one or more intrachain disulfide bridges.

It localises to the mitochondrion. The catalysed reaction is L-tyrosyl-[protein] + ATP = O-(5'-adenylyl)-L-tyrosyl-[protein] + diphosphate. Its function is as follows. Catalyzes the transfer of adenosine 5'-monophosphate (AMP) to Tyr residues of target mitochondrial proteins (AMPylation). Involved in redox homeostasis by regulating the cellular response to oxidative stress. Regulates protein S-glutathionylation levels possibly by AMPylation of deglutathionylation enzymes such as glutaredoxins. The chain is Protein adenylyltransferase SelO, mitochondrial from Schizosaccharomyces pombe (strain 972 / ATCC 24843) (Fission yeast).